A 410-amino-acid polypeptide reads, in one-letter code: Cathepsin D (410 aa).

The signal sequence occupies residues M1 to A18. A propeptide spans A19–G64 (activation peptide). Residues Y79–A405 form the Peptidase A1 domain. Disulfide bonds link C91/C160 and C110/C117. D97 is a catalytic residue. N134 and N261 each carry an N-linked (GlcNAc...) asparagine glycan. Cysteines 284 and 288 form a disulfide. D293 is an active-site residue. A disulfide bond links C327 and C364.

It belongs to the peptidase A1 family. In terms of assembly, consists of a light chain and a heavy chain. Interacts with ADAM30; this leads to activation of CTSD. Interacts with GRN; stabilizes CTSD; increases its proteolytic activity. N- and O-glycosylated. Post-translationally, undergoes proteolytic cleavage and activation by ADAM30.

It is found in the lysosome. Its subcellular location is the melanosome. The protein resides in the secreted. It localises to the extracellular space. The enzyme catalyses Specificity similar to, but narrower than, that of pepsin A. Does not cleave the 4-Gln-|-His-5 bond in B chain of insulin.. In terms of biological role, acid protease active in intracellular protein breakdown. Plays a role in APP processing following cleavage and activation by ADAM30 which leads to APP degradation. This chain is Cathepsin D (CTSD), found in Canis lupus familiaris (Dog).